Consider the following 151-residue polypeptide: Arginine repressor (151 aa).

This sequence belongs to the ArgR family.

It localises to the cytoplasm. Its pathway is amino-acid biosynthesis; L-arginine biosynthesis [regulation]. In terms of biological role, regulates arginine biosynthesis genes. The protein is Arginine repressor of Lachnospira eligens (strain ATCC 27750 / DSM 3376 / VPI C15-48 / C15-B4) (Eubacterium eligens).